The chain runs to 222 residues: MGEEARALDMEEISDNTTRRNDVVHDLMVDLYPLSSYYFGSKEALRVKDEIISDRVIRLKSNYAAHGLRTCVEAVLLVELFKHPHVLLLQYRNSIFKLPGGRLRPGESDIEGLKRKLASKLSVNENVGVSGYEVGECIGMWWRPNFETLMYPFLPPNIKHPKECTKLFLVRLPVHQQFVVPKNFKLLAVPLCQLHENEKTYGPIMSQIPKLLSKFSFNMMEI.

In terms of domain architecture, Nudix hydrolase spans 67–194 (GLRTCVEAVL…KLLAVPLCQL (128 aa)). Residues 94–96 (SIF) are interaction with RNA. A Nudix box motif is present at residues 101–122 (GRLRPGESDIEGLKRKLASKLS).

It belongs to the Nudix hydrolase family. CPSF5 subfamily. As to quaternary structure, homodimer. Component of the cleavage factor Im (CFIm) complex. Forms a complex with cleavage and polyadenylation specificity factor (CPSF) subunits FIPS5.

It localises to the nucleus. In terms of biological role, component of the cleavage factor Im (CFIm) complex that plays a key role in pre-mRNA 3'-processing. Involved in association with CPSF6 or CPSF7 in pre-MRNA 3'-end poly(A) site cleavage and poly(A) addition. NUDT21/CPSF5 binds to cleavage and polyadenylation RNA substrates. The homodimer mediates simultaneous sequence-specific recognition of two 5'-UGUA-3' elements within the pre-mRNA. Binds to, but does not hydrolyze mono- and di-adenosine nucleotides. May have a role in mRNA export. The sequence is that of Pre-mRNA cleavage factor Im 25 kDa subunit 1 from Arabidopsis thaliana (Mouse-ear cress).